The following is an 818-amino-acid chain: H(+)/Cl(-) exchange transporter 3 (818 aa).

Topologically, residues 1–125 (MESEQLFHRG…WEMTKSLYDA (125 aa)) are cytoplasmic. 3 consecutive short sequence motifs (di-leucine internalization motif; mediates targeting to late endosome and lysosome membranes) follow at residues 28–29 (LL), 46–47 (LL), and 71–75 (LLDLL). Residues 126-163 (WSGWLVVTLTGLASGALAGLIDIAADWMTDLKEGICLS) traverse the membrane as a helical segment. The N-linked (GlcNAc...) asparagine glycan is linked to Asn177. A helical transmembrane segment spans residues 209 to 232 (MNYIMYIFWALSFAFLAVSLVKVF). Residues 238–242 (GSGIP) carry the Selectivity filter part_1 motif. Residue Ser239 participates in chloride binding. The helical intramembrane region spans 241–248 (IPEIKTIL). Helical transmembrane passes span 258-276 (GKWT…VASG) and 282-301 (EGPL…YLFP). A Selectivity filter part_2 motif is present at residues 280–284 (GKEGP). 2 consecutive intramembrane regions (helical) follow at residues 313-325 (VLSA…VSVA) and 329-337 (PIGGVLFSL). 3 helical membrane passes run 349–367 (LWRS…RSIN), 391–416 (FPFI…AWCR), and 423–443 (FGKY…VIAF). N-linked (GlcNAc...) asparagine glycans are attached at residues Asn451 and Asn479. Helical transmembrane passes span 500-520 (IWQL…TFGI) and 525-544 (GLFI…VGIA). The short motif at 525–529 (GLFIP) is the Selectivity filter part_3 element. Phe527 contributes to the chloride binding site. Intramembrane regions (helical) lie at residues 572-586 (GLYA…LGGV) and 590-601 (TVSLVVIVFELT). An intramembrane region (note=Loop between two helices) is located at residues 602–605 (GGLE). A helical transmembrane segment spans residues 606 to 624 (YIVPLMAAVMTSKWVGDAF). Residues 625–818 (GREGIYEAHI…NQDPASIMFN (194 aa)) lie on the Cytoplasmic side of the membrane. Tyr630 lines the chloride pocket. 2 CBS domains span residues 658–722 (MRPR…ARKK) and 755–812 (LDMS…NQDP). ATP-binding positions include 689-691 (YNG) and 796-799 (TKKD).

Belongs to the chloride channel (TC 2.A.49) family. ClC-3/CLCN3 subfamily. Monomer and homodimer. Forms heterodimers with CLCN4. In terms of processing, N-glycosylated. Abundant in brain, especially in the olfactory bulb, hippocampus, and cerebellum. A moderate expression is seen in the lung, kidney and adrenal gland.

It is found in the lysosome membrane. Its subcellular location is the late endosome membrane. The protein localises to the cell membrane. It localises to the early endosome membrane. Its function is as follows. Strongly outwardly rectifying, electrogenic H(+)/Cl(-)exchanger which mediates the exchange of chloride ions against protons. The CLC channel family contains both chloride channels and proton-coupled anion transporters that exchange chloride or another anion for protons. The presence of conserved gating glutamate residues is typical for family members that function as antiporters. Strongly outwardly rectifying, electrogenic H(+)/Cl(-)exchanger which mediates the exchange of chloride ions against protons. May play an important role in neuronal cell function through regulation of membrane excitability by protein kinase C. It could help neuronal cells to establish short-term memory. In Rattus norvegicus (Rat), this protein is H(+)/Cl(-) exchange transporter 3 (Clcn3).